A 148-amino-acid polypeptide reads, in one-letter code: NADPH-dependent 7-cyano-7-deazaguanine reductase (148 aa).

Cys-50 serves as the catalytic Thioimide intermediate. The active-site Proton donor is the Asp-57. Residues 72-74 (VES) and 91-92 (HE) each bind substrate.

This sequence belongs to the GTP cyclohydrolase I family. QueF type 1 subfamily.

It localises to the cytoplasm. The enzyme catalyses 7-aminomethyl-7-carbaguanine + 2 NADP(+) = 7-cyano-7-deazaguanine + 2 NADPH + 3 H(+). Its pathway is tRNA modification; tRNA-queuosine biosynthesis. In terms of biological role, catalyzes the NADPH-dependent reduction of 7-cyano-7-deazaguanine (preQ0) to 7-aminomethyl-7-deazaguanine (preQ1). The chain is NADPH-dependent 7-cyano-7-deazaguanine reductase from Helicobacter acinonychis (strain Sheeba).